Here is a 98-residue protein sequence, read N- to C-terminus: NADH-ubiquinone oxidoreductase chain 4L (98 aa).

The next 3 helical transmembrane spans lie at 1 to 21 (MPVV…GLLV), 29 to 49 (SLLC…VTVL), and 61 to 81 (IILL…LVMV).

This sequence belongs to the complex I subunit 4L family. In terms of assembly, core subunit of respiratory chain NADH dehydrogenase (Complex I) which is composed of 45 different subunits.

Its subcellular location is the mitochondrion inner membrane. It carries out the reaction a ubiquinone + NADH + 5 H(+)(in) = a ubiquinol + NAD(+) + 4 H(+)(out). In terms of biological role, core subunit of the mitochondrial membrane respiratory chain NADH dehydrogenase (Complex I) which catalyzes electron transfer from NADH through the respiratory chain, using ubiquinone as an electron acceptor. Part of the enzyme membrane arm which is embedded in the lipid bilayer and involved in proton translocation. The sequence is that of NADH-ubiquinone oxidoreductase chain 4L (MT-ND4L) from Ursus arctos (Brown bear).